The primary structure comprises 177 residues: Inorganic pyrophosphatase (177 aa).

Positions 30, 44, and 56 each coordinate substrate. Residues D66, D71, and D103 each contribute to the Mg(2+) site. Y142 is a binding site for substrate.

It belongs to the PPase family. Homohexamer. Requires Mg(2+) as cofactor.

It is found in the cytoplasm. The enzyme catalyses diphosphate + H2O = 2 phosphate + H(+). Functionally, catalyzes the hydrolysis of inorganic pyrophosphate (PPi) forming two phosphate ions. The sequence is that of Inorganic pyrophosphatase from Agrobacterium fabrum (strain C58 / ATCC 33970) (Agrobacterium tumefaciens (strain C58)).